A 301-amino-acid polypeptide reads, in one-letter code: Protoheme IX farnesyltransferase (301 aa).

9 helical membrane-spanning segments follow: residues 29 to 49, 51 to 71, 96 to 116, 123 to 143, 151 to 171, 177 to 197, 223 to 243, 244 to 264, and 281 to 301; these read VVALMLLTVLVGMCLAVPGTV, LVPLIAGMAGIGMMAGSAAAF, ISIIKAISFASILGTLGFIIL, LTAWLTFASLIGYAVVYTAYL, IVVGGLAGAMPPLLGWTAVTG, ALLLVIIIFAWTPPHFWALAI, CIFLYTVLLAIACLLPVLVGM, CGPVYLVSSTLLSAGFIYKAW, and FSIYHLMLLFIALLVDHYLWV.

The protein belongs to the UbiA prenyltransferase family. Protoheme IX farnesyltransferase subfamily.

The protein localises to the cell inner membrane. The enzyme catalyses heme b + (2E,6E)-farnesyl diphosphate + H2O = Fe(II)-heme o + diphosphate. It functions in the pathway porphyrin-containing compound metabolism; heme O biosynthesis; heme O from protoheme: step 1/1. Converts heme B (protoheme IX) to heme O by substitution of the vinyl group on carbon 2 of heme B porphyrin ring with a hydroxyethyl farnesyl side group. This is Protoheme IX farnesyltransferase from Shewanella pealeana (strain ATCC 700345 / ANG-SQ1).